Reading from the N-terminus, the 250-residue chain is Probable transcriptional regulatory protein Cpha266_0538 (250 aa).

It belongs to the TACO1 family.

The protein resides in the cytoplasm. The chain is Probable transcriptional regulatory protein Cpha266_0538 from Chlorobium phaeobacteroides (strain DSM 266 / SMG 266 / 2430).